We begin with the raw amino-acid sequence, 417 residues long: Chaperone SurA (417 aa).

Residues 1 to 12 (MGAALLCSFAHA) form the signal peptide. PpiC domains follow at residues 163–264 (SEEY…KLEE) and 273–372 (RDEV…QVLG).

Its subcellular location is the periplasm. The enzyme catalyses [protein]-peptidylproline (omega=180) = [protein]-peptidylproline (omega=0). Chaperone involved in the correct folding and assembly of outer membrane proteins. Recognizes specific patterns of aromatic residues and the orientation of their side chains, which are found more frequently in integral outer membrane proteins. May act in both early periplasmic and late outer membrane-associated steps of protein maturation. The protein is Chaperone SurA of Pseudomonas aeruginosa (strain ATCC 15692 / DSM 22644 / CIP 104116 / JCM 14847 / LMG 12228 / 1C / PRS 101 / PAO1).